Here is a 267-residue protein sequence, read N- to C-terminus: Endonuclease NucS (267 aa).

Belongs to the NucS endonuclease family.

The protein localises to the cytoplasm. Its function is as follows. Cleaves both 3' and 5' ssDNA extremities of branched DNA structures. The polypeptide is Endonuclease NucS (Pyrococcus furiosus (strain ATCC 43587 / DSM 3638 / JCM 8422 / Vc1)).